The sequence spans 192 residues: Signal peptidase complex catalytic subunit SEC11C (192 aa).

At valine 2–arginine 28 the chain is on the cytoplasmic side. A helical; Signal-anchor for type II membrane protein membrane pass occupies residues glutamine 29–tryptophan 48. Residues lysine 49–serine 192 are Lumenal-facing. Residues serine 68, histidine 108, and aspartate 134 each act as charge relay system in the active site. The tract at residues alanine 177–leucine 188 is C-terminal short (CTS) helix.

The protein belongs to the peptidase S26B family. As to quaternary structure, component of the signal peptidase complex paralog C (SPC-C) composed of a catalytic subunit SEC11C and three accessory subunits SPCS1, SPCS2 and SPCS3. Within the complex, interacts with SPCS2 and SPCS3. The complex induces a local thinning of the ER membrane which is used to measure the length of the signal peptide (SP) h-region of protein substrates. This ensures the selectivity of the complex towards h-regions shorter than 18-20 amino acids. In terms of processing, may undergo processing at the N-terminus.

The protein resides in the endoplasmic reticulum membrane. The enzyme catalyses Cleavage of hydrophobic, N-terminal signal or leader sequences from secreted and periplasmic proteins.. In terms of biological role, catalytic component of the signal peptidase complex (SPC) which catalyzes the cleavage of N-terminal signal sequences from nascent proteins as they are translocated into the lumen of the endoplasmic reticulum. Specifically cleaves N-terminal signal peptides that contain a hydrophobic alpha-helix (h-region) shorter than 18-20 amino acids. This Canis lupus familiaris (Dog) protein is Signal peptidase complex catalytic subunit SEC11C (SEC11C).